The sequence spans 275 residues: Melanoma-associated antigen B5 (275 aa).

The tract at residues 1-33 is disordered; that stretch reads MTSAGVFNAGSDERANSRDEEYPCSSEVSPSTE. Positions 11-21 are enriched in basic and acidic residues; that stretch reads SDERANSRDEE. Positions 23–33 are enriched in low complexity; it reads PCSSEVSPSTE. Residues 40 to 239 form the MAGE domain; sequence INIKVGLLEQ…GAFSSQYEEA (200 aa).

Expressed in testis. Not expressed in other normal tissues, but is expressed in tumors of different histological origins.

The chain is Melanoma-associated antigen B5 (MAGEB5) from Homo sapiens (Human).